The following is a 924-amino-acid chain: Bifunctional glutamine synthetase adenylyltransferase/adenylyl-removing enzyme (924 aa).

The adenylyl removase stretch occupies residues 1–422 (MQTKGCRFFM…QFKKLIQEEV (422 aa)). Positions 424 to 924 (SPDETDTELE…PASTMALESE (501 aa)) are adenylyl transferase.

The protein belongs to the GlnE family. Requires Mg(2+) as cofactor.

The enzyme catalyses [glutamine synthetase]-O(4)-(5'-adenylyl)-L-tyrosine + phosphate = [glutamine synthetase]-L-tyrosine + ADP. It carries out the reaction [glutamine synthetase]-L-tyrosine + ATP = [glutamine synthetase]-O(4)-(5'-adenylyl)-L-tyrosine + diphosphate. Functionally, involved in the regulation of glutamine synthetase GlnA, a key enzyme in the process to assimilate ammonia. When cellular nitrogen levels are high, the C-terminal adenylyl transferase (AT) inactivates GlnA by covalent transfer of an adenylyl group from ATP to specific tyrosine residue of GlnA, thus reducing its activity. Conversely, when nitrogen levels are low, the N-terminal adenylyl removase (AR) activates GlnA by removing the adenylyl group by phosphorolysis, increasing its activity. The regulatory region of GlnE binds the signal transduction protein PII (GlnB) which indicates the nitrogen status of the cell. The polypeptide is Bifunctional glutamine synthetase adenylyltransferase/adenylyl-removing enzyme (Acinetobacter baylyi (strain ATCC 33305 / BD413 / ADP1)).